Consider the following 189-residue polypeptide: uncharacterized protein (189 aa).

Residues 9 to 69 (ADTGGRILRA…SMLTSHIAAV (61 aa)) enclose the HTH tetR-type domain. Residues 32 to 51 (TLAEIARRAGVSRPTVYRRW) constitute a DNA-binding region (H-T-H motif).

This is an uncharacterized protein from Mycobacterium bovis (strain ATCC BAA-935 / AF2122/97).